Consider the following 1273-residue polypeptide: Ribulose bisphosphate carboxylase small subunit, chloroplastic (1273 aa).

The transit peptide at 1–134 (MPFDRQPLLS…AVLPFTSEKD (134 aa)) directs the protein to the chloroplast. Propeptides lie at residues 269–278 (GMAAMTGEKD), 412–421 (GMAAMTGEKD), 556–565 (GMAAMTGEKD), 699–708 (GMAAMTGEKD), 844–853 (GMAAMTGEKE), 987–996 (GMAAMTGEKD), and 1131–1140 (GMAAMTGEKE).

It belongs to the RuBisCO small chain family. As to quaternary structure, heterohexadecamer of 8 large and 8 small subunits. Eight small subunits are processed from a large polyprotein. All start with the same sequence but there is more heterogeneity at the C-terminus.

The protein localises to the plastid. Its subcellular location is the chloroplast. RuBisCO catalyzes two reactions: the carboxylation of D-ribulose 1,5-bisphosphate, the primary event in carbon dioxide fixation, as well as the oxidative fragmentation of the pentose substrate. Both reactions occur simultaneously and in competition at the same active site. Although the small subunit is not catalytic it is essential for maximal activity. This is Ribulose bisphosphate carboxylase small subunit, chloroplastic from Euglena gracilis.